Consider the following 993-residue polypeptide: MLSEQGLLSDCGNNYFQMTSCILSGSIQTTPQVSAGGSEAKPLIFTFVPTVRRLPTHTQLADTSKFLVKIPEESSDKSPETVNRSKSNDYLTLNAGSQQERDQAKLTCPSEVSGTILQEREFEANKLQGMQQSDLFKAEYVLIVDSEGEDEAASRKVEQGPPGGIGTAAVRPKSLAISSSLVSDVVRPKTQGTDLKTSSHPEMLHGMAPQQKHGQLTSSPTTSEQLACKPPAFSFVSPTNPNTPPDPVNLEGASVLEEFHTRRLDVGGAVVEESATYFQTTAHSTPFSASKGTSSTLLFPHSTQLSGSNLPSSTAADPKPGLTSEVLKKTTLTSHVLSHGESPRTSSSPPSSSASLKSNSASYIPVRIVTHSLSPSPKPFTSSFHGSSSTICSQMSSSGNLSKSGVKSPVPSRLALLTAILKSNPSHQRPFSPASCPTFSLNSPASSTLTLDQKEKQTPPTPKKSLSSCSLRAGSPDQGELQVSELTQQSFHLPVFTKSTPLSQAPSLSPTKQASSSLASMNVERTPSPTLKSNTMLSLLQTSTSSSVGLPPVPPSSSLSSLKSKQDGDLRGPENPRNIHTYPSTLASSALSSLSPPINQRATFSSSEKCFHPSPALSSLINRSKRASSQLSGQELNPSALPSLPVSSADFASLPNLRSSSLPHANLPTLVPQLSPSALHPHCGSGTLPSRLGKSESTTPNHRSPVSTPSLPISLTRTEELISPCALSMSTGPENKKSKQYKTKSSYKAFAAIPTNTLLLEQKALDEPAKTESVSKDNTLEPPVELYFPAQLRQQTEELCATIDKVLQDSLSMHSSDSPSRSPKTLLGSDTVKTPTTLPRAAGRETKYANLSSPSSTVSESQLTKPGVIRPVPVKSRILLKKEEEVYEPNPFSKYLEDNSDLFSEQDVTVPPKPVSLHPLYQTKLYPPAKSLLHPQTLSHADCLAPGPFSHLSFSLSDEQENSHTLLSHNACNKLSHPMVAIPEHEALDSKEQ.

Residues M1–V51 form an interaction with LMNA region. The tract at residues P71–Y90 is disordered. The span at E80–Y90 shows a compositional bias: polar residues. S146 is modified (phosphoserine). Disordered regions lie at residues A152–R171, V186–Q225, P231–L250, P300–L322, S334–S358, S443–L481, T500–Y582, S677–L711, and L811–T864. The segment at P161–T837 is required for interaction with ISL1. Polar residues predominate over residues K212–Q225. Residues P300–A315 show a composition bias toward polar residues. Residues P343–S358 are compositionally biased toward low complexity. Over residues T500–K532 the composition is skewed to polar residues. The span at S533–K563 shows a compositional bias: low complexity. A compositionally biased stretch (basic and acidic residues) spans S564–E574. Over residues S695–L711 the composition is skewed to polar residues. Residues L811–S822 show a composition bias toward low complexity. S818 bears the Phosphoserine mark. Residues A849–T864 show a composition bias toward polar residues.

In terms of assembly, directly interacts with LMNA. Interacts with ISL1 (via N-terminal domain); the interaction represses ISL1 transactivator activity. Interactions of ISL1 with MLIP1 and GCN5/KAT2A may be mutually exclusive. As to expression, predominantly expressed in the heart and skeletal muscle. Also detected in liver. In terms of tissue distribution, expressed in skeletal muscle.

It localises to the nucleus. The protein resides in the nucleus envelope. Its subcellular location is the PML body. The protein localises to the cytoplasm. It is found in the cytosol. It localises to the cell membrane. The protein resides in the sarcolemma. In terms of biological role, required for myoblast differentiation into myotubes, possibly acting as a transcriptional regulator of the myogenic program. Required for cardiac adaptation to stress through integrated regulation of the AKT/mTOR pathways and FOXO1. Regulates cardiac homeostasis and plays a role in the protection against cardiac hypertrophy. Binds chromatin. May act as a transcriptional cofactor for ISL1, repressing its transcriptional activity. May also repress MYOCD transcriptional activity. The sequence is that of Muscular LMNA-interacting protein from Homo sapiens (Human).